We begin with the raw amino-acid sequence, 180 residues long: MAEDDLCSLFFKLKVEDVTSSDELARHMKNASNERKPLIEPGENQSMDIDEEGGSVGHGLLYLYVDCPTMMLCFYGGSLPYNWMQGALLTNLPPYQHDVTLDEVNRGLRQASGFFGYADPMRSAYFAAFSFPGRVIKLNEQMELTSTKGKCLTFDLYASTQLRFELGELVRHGECKFAIG.

Hydrolyzes cytokinin glucosides thus liberating free cytokinins. This is Cytokinin-beta-glucosidase 1 (ROLC1) from Panax ginseng (Korean ginseng).